The sequence spans 482 residues: MTVTDSTPEGNVTAELCNWVTELKPSDIPADVLQRAKHLLLDGIACGLVGSHVPWSEQAAKAIDDYEPEGYCSVIGYNRRYGPQAAAILNGSFIQAVELDDYHSAAPLHSASVLLPALFAAAEVQSKGHRKSVVSGLDFLVALVVGFETGPRVGSAMYGADLLSRGWHSGPVFGSPAAAAASSKLLGLSPDDTESAVGIACTQAGGLMAAQYEGMVKRVQHAFAARNGLFGALLARDGYVGIKKVFDRSYGGFLTMFTQGNGRTPQYKPEEVTTALGKEWQTTNIRVKLHACVGGCHGQIEALEKLQRNYPDRFAVDQLHNIRRITVSLSEPVFAHDGWAPEERPLTATGGQMNAAYIGAAQLVYGQVLLDQFEPHALDSDAVWSLIDKTTCVHSSEFDKPGHLCGARIVVEFNDGETVEDVVAMPKGFDPPITDDEIREKWRKLASSVIDSERLQRIENSVLSLETSADVSELLALISGEL.

The protein belongs to the PrpD family.

It participates in secondary metabolite biosynthesis. In terms of biological role, cis-aconitate decarboxylase-like protein; part of the gene cluster that mediates the biosynthesis of oryzines, natural products with an unusual maleidride backbone. The two subunits of the fungal fatty acid synthase oryfasA and oryfasB probably form octenoic acid. This fatty acid is most likely activated by the acyl-CoA ligase oryP to give octenyl-CoA before the citrate synthase-like protein oryE catalyzes condensation with oxaloacetate to form tricarboxylic acid. The next steps of the pathways are conjectural, but a favorite possible route has been proposed, beginning with decarboxylation and concomitant dehydration by the decarboxylase oryM, followed by tautomerization, which may lead to the production of a diene intermediate. Reduction of this diene intermediate could give the known metabolite piliformic acid. On the pathway to oryzine B and oryzine A, however, hydroxylation of the diene by the alpha-ketoglutarate-dependent dioxygenase oryG and lactonisation by the lactonohydrolases oryH or oryL could give oryzine B directly. Finally, enoyl reduction by the dehydrogenase oryD would then convert oryzine B into oryzine A. In Aspergillus oryzae (strain ATCC 42149 / RIB 40) (Yellow koji mold), this protein is Cis-aconitate decarboxylase-like protein oryM.